Here is a 299-residue protein sequence, read N- to C-terminus: Methionine aminopeptidase (299 aa).

Residue His-64 participates in substrate binding. Asp-84, Asp-95, and His-158 together coordinate a divalent metal cation. His-166 is a binding site for substrate. The a divalent metal cation site is built by Glu-191 and Glu-284.

The protein belongs to the peptidase M24A family. Methionine aminopeptidase archaeal type 2 subfamily. As to quaternary structure, monomer. Requires Co(2+) as cofactor. It depends on Zn(2+) as a cofactor. The cofactor is Mn(2+). Fe(2+) serves as cofactor.

The catalysed reaction is Release of N-terminal amino acids, preferentially methionine, from peptides and arylamides.. Removes the N-terminal methionine from nascent proteins. The N-terminal methionine is often cleaved when the second residue in the primary sequence is small and uncharged (Met-Ala-, Cys, Gly, Pro, Ser, Thr, or Val). The protein is Methionine aminopeptidase of Methanothermobacter thermautotrophicus (strain ATCC 29096 / DSM 1053 / JCM 10044 / NBRC 100330 / Delta H) (Methanobacterium thermoautotrophicum).